Here is a 404-residue protein sequence, read N- to C-terminus: cAMP-dependent protein kinase regulatory subunit (404 aa).

Residues 14–144 (LTDHELLRIP…RLKTAIAGNF (131 aa)) form a dimerization and phosphorylation region. Ser105 is modified (phosphoserine). Residues 145 to 276 (LFSH…EKFP), Glu223, Arg232, 277 to 398 (CCRH…GVEE), Glu344, and Arg353 contribute to the 3',5'-cyclic AMP site.

It belongs to the cAMP-dependent kinase regulatory chain family. As to quaternary structure, tetramer, composed of 2 regulatory (R) and 2 catalytic (C) subunits. In the presence of cAMP it dissociates into 2 active monomeric C subunits and an R dimer.

In terms of biological role, cAMP-dependent protein kinase PKA regulatory subunit. In Colletotrichum trifolii, this protein is cAMP-dependent protein kinase regulatory subunit (PKAR).